The sequence spans 225 residues: Small ribosomal subunit protein uS3 (225 aa).

Positions 38 to 106 constitute a KH type-2 domain; that stretch reads IRKFVQNRFN…PVNLNIIEVK (69 aa).

Belongs to the universal ribosomal protein uS3 family. Part of the 30S ribosomal subunit. Forms a tight complex with proteins S10 and S14.

Functionally, binds the lower part of the 30S subunit head. Binds mRNA in the 70S ribosome, positioning it for translation. This Leptospira interrogans serogroup Icterohaemorrhagiae serovar copenhageni (strain Fiocruz L1-130) protein is Small ribosomal subunit protein uS3.